Here is a 1551-residue protein sequence, read N- to C-terminus: Transient receptor potential cation channel subfamily M member-like 2 (1551 aa).

Topologically, residues 1–714 (MGKDSFTPLY…WMGTMAMNTR (714 aa)) are cytoplasmic. The stretch at 715 to 730 (WWKVLVCLYLPVLIFP) is an intramembrane region. Over 731–837 (IIYFVPDEQH…DRIMHFYSAP (107 aa)) the chain is Cytoplasmic. The interval 744–767 (AAEREHQKSLNQKSSKVKSHKEKN) is disordered. A helical transmembrane segment spans residues 838 to 858 (FSKFVGNVVGYLAFIFLYAYV). Topologically, residues 859–877 (VLFNFPRFDPAKTLGGIHP) are extracellular. A helical membrane pass occupies residues 878-898 (TEIVLYFWVFTILIEEIRQLA). Ca(2+) is bound by residues Glu-893 and Gln-896. At 899–916 (AKPPKYIKDKVSVYFSDT) the chain is on the cytoplasmic side. The chain crosses the membrane as a helical span at residues 917 to 937 (WNFVDIFSLTVFIIAIILRFF). Ca(2+) is bound by residues Asn-918 and Asp-921. Over 938-947 (TNSRIFTASR) the chain is Extracellular. The helical transmembrane segment at 948 to 968 (IILSLDIIFFIVRSLQIFSVN) threads the bilayer. Over 969 to 980 (RLLGPKLVMIQK) the chain is Cytoplasmic. Residues 981-1001 (MMQDLAQFIIILAVFTIAYGI) traverse the membrane as a helical segment. At 1002–1018 (ALHAVMFPSPGIYARNN) the chain is on the extracellular side. N-linked (GlcNAc...) asparagine glycosylation is present at Asn-1017. An intramembrane region (pore-forming) is located at residues 1019 to 1034 (TWVTITSVVQYPYWQM). The Selectivity filter signature appears at 1035–1037 (YGE). At 1035 to 1059 (YGELFLDEIQGEKPKEFGEVDPDGR) the chain is on the extracellular side. Residues 1040–1042 (LDE) carry the Prevents fast channel inactivation motif. A helical membrane pass occupies residues 1060–1080 (WLSPLLLAIYMVFTNILLLNL). Residues 1081-1116 (LIAIFNYTFERVQEDSDKVWKFQRYDLVQEYHSRPV) lie on the Cytoplasmic side of the membrane. An intramembrane segment occupies 1117–1135 (FAPPLVLLGHILIFIRWVW). Residues 1136–1551 (RMCRCGHPPR…KVAKMRDAAF (416 aa)) are Cytoplasmic-facing. A coiled-coil region spans residues 1184–1209 (LEERVRALGDRVDCINSQLNRVLDSM). Positions 1394-1546 (WKRTSAGVML…VSILEKVAKM (153 aa)) constitute a Nudix hydrolase domain. A Nudix box motif is present at residues 1428–1449 (GMVEPGQLVTQALKAEFGEEAM).

This sequence belongs to the transient receptor (TC 1.A.4) family. LTrpC subfamily. TRPM2 sub-subfamily. In terms of assembly, homotetramer.

The protein localises to the cell membrane. With respect to regulation, activated by phosphatidylinositol 4,5-bisphosphate (PIP2). Although PIP2 is essential for the channel activation, its contribution to the level of channel activity is minimal. Also activated by diphosphate ribose-2'-phosphate. Upon binding to ADPR, channel activation requires only a short initial cytosolic Ca(2+) increase, then the activation is sustained by the uptake of extracellular Ca(2+). Activated by 2-aminoethyl diphenylborinate (2-APB) in a Ca(2+)-dependent manner. 2-APB prevents the inactivation of the channel. Its function is as follows. Nonselective, voltage-independent cation channel that mediates Ca(2+) and to a lesser extent Na(+) influx, leading to increased cytoplasmic Ca(2+) levels. Functions as a ligand-gated ion channel. Binding of ADP-ribose causes a conformation change; the channel is primed but still requires Ca(2+) binding to trigger channel opening. May have ADP-ribose pyrophosphatase activity which reduces ADP-ribose levels induced by oxidative stress, thus preventing the channel activation by reactive oxygen species. This is Transient receptor potential cation channel subfamily M member-like 2 from Nematostella vectensis (Starlet sea anemone).